The sequence spans 188 residues: CASP-like protein 4B1 (188 aa).

Residues 1–11 (MTNPDKQKPVE) are compositionally biased toward basic and acidic residues. Residues 1-34 (MTNPDKQKPVEVTDVETAAEKTSEPTPASGTSTI) form a disordered region. The Cytoplasmic segment spans residues 1-46 (MTNPDKQKPVEVTDVETAAEKTSEPTPASGTSTITQRWKREDLIKK). The span at 24 to 34 (EPTPASGTSTI) shows a compositional bias: polar residues. The helical transmembrane segment at 47–67 (ASPITRGICLLFSLLAFLIMV) threads the bilayer. The Extracellular portion of the chain corresponds to 68–84 (SNKHGYGRNFNEYEEYR). The helical transmembrane segment at 85-105 (YVLAISIISTLYTAWQTFAHF) threads the bilayer. Topologically, residues 106-120 (SKREFFDRRTSTLVD) are cytoplasmic. Residues 121 to 141 (FSGDQIVAYLLISAASSAIPL) form a helical membrane-spanning segment. The Extracellular portion of the chain corresponds to 142–156 (TNRFREGQDNIFTDS). A helical membrane pass occupies residues 157–177 (AASAISMAIFAFVALALSALF). The Cytoplasmic portion of the chain corresponds to 178–188 (SGYKLSTHSFI).

The protein belongs to the Casparian strip membrane proteins (CASP) family. Homodimer and heterodimers.

Its subcellular location is the cell membrane. This is CASP-like protein 4B1 from Arabidopsis lyrata subsp. lyrata (Lyre-leaved rock-cress).